Reading from the N-terminus, the 317-residue chain is SWI/SNF-related matrix-associated actin-dependent regulator of chromatin subfamily E member 1-related (317 aa).

A compositionally biased stretch (low complexity) spans 1–22 (MSHGPKQPGAASAPASGKAPGQ). The disordered stretch occupies residues 1–71 (MSHGPKQPGA…RKKILPNGPK (71 aa)). Residue lysine 31 forms a Glycyl lysine isopeptide (Lys-Gly) (interchain with G-Cter in SUMO2) linkage. The segment covering 31–52 (KQERGEGPRAGEKGSHEEEPVK) has biased composition (basic and acidic residues). The segment covering 53 to 65 (KRGWPKGKKRKKI) has biased composition (basic residues). The HMG box DNA-binding region spans 70–138 (PKAPVTGYVR…QYMKELRAYQ (69 aa)). Residue serine 160 is modified to Phosphoserine. The stretch at 190–257 (EEFLDQNKAR…LQQQLQAVRQ (68 aa)) forms a coiled coil.

Component of a BHC histone deacetylase complex that contains HDAC1, HDAC2, HMG20B/BRAF35, KDM1A, RCOR1/CoREST and PHF21A/BHC80. The BHC complex may also contain ZMYM2, ZNF217, ZMYM3, GSE1 and GTF2I. Interacts with the BRCA2 tumor suppressor protein.

The protein resides in the nucleus. Its subcellular location is the chromosome. Its function is as follows. Required for correct progression through G2 phase of the cell cycle and entry into mitosis. Required for RCOR1/CoREST mediated repression of neuronal specific gene promoters. In Bos taurus (Bovine), this protein is SWI/SNF-related matrix-associated actin-dependent regulator of chromatin subfamily E member 1-related (HMG20B).